The chain runs to 1068 residues: Transcription factor PDR1 (1068 aa).

The disordered stretch occupies residues Met1–Pro38. Over residues Asp17–Phe31 the composition is skewed to polar residues. Ser21 bears the Phosphoserine mark. Residues Cys46–Cys72 constitute a DNA-binding region (zn(2)-C6 fungal-type). Disordered regions lie at residues Thr95–Cys120 and Lys133–Gln166. Over residues Ser104–Arg114 the composition is skewed to polar residues. Over residues Gly135–Asp146 the composition is skewed to low complexity. Ser930, Ser942, and Ser948 each carry phosphoserine. The disordered stretch occupies residues Asn1005 to Asn1029. Positions Glu1054 to Ser1062 match the 9aaTAD motif.

The protein localises to the nucleus. Functionally, positive regulator of proteins involved in permeability. PDR1 and PDR3 jointly control the transcription level of both SNQ2 and PDR5. The chain is Transcription factor PDR1 (PDR1) from Saccharomyces cerevisiae (strain ATCC 204508 / S288c) (Baker's yeast).